The sequence spans 498 residues: Glycerol kinase (498 aa).

Threonine 12 contacts ADP. ATP-binding residues include threonine 12, threonine 13, and serine 14. Threonine 12 is a binding site for sn-glycerol 3-phosphate. Arginine 16 serves as a coordination point for ADP. Residues arginine 82, glutamate 83, and tyrosine 134 each coordinate sn-glycerol 3-phosphate. Residues arginine 82, glutamate 83, and tyrosine 134 each contribute to the glycerol site. A Phosphohistidine; by HPr modification is found at histidine 230. A sn-glycerol 3-phosphate-binding site is contributed by aspartate 244. Glycerol-binding residues include aspartate 244 and glutamine 245. Residues threonine 266, glycine 309, glutamine 313, glycine 410, and asparagine 414 each coordinate ADP. ATP is bound by residues threonine 266, glycine 309, glutamine 313, and glycine 410.

It belongs to the FGGY kinase family. As to quaternary structure, homotetramer and homodimer (in equilibrium). The phosphoenolpyruvate-dependent sugar phosphotransferase system (PTS), including enzyme I, and histidine-containing protein (HPr) are required for the phosphorylation, which leads to the activation of the enzyme.

The catalysed reaction is glycerol + ATP = sn-glycerol 3-phosphate + ADP + H(+). It functions in the pathway polyol metabolism; glycerol degradation via glycerol kinase pathway; sn-glycerol 3-phosphate from glycerol: step 1/1. With respect to regulation, activated by phosphorylation and inhibited by fructose 1,6-bisphosphate (FBP). Its function is as follows. Key enzyme in the regulation of glycerol uptake and metabolism. Catalyzes the phosphorylation of glycerol to yield sn-glycerol 3-phosphate. This Staphylococcus aureus (strain COL) protein is Glycerol kinase.